Consider the following 140-residue polypeptide: Large ribosomal subunit protein mL43 (140 aa).

Belongs to the mitochondrion-specific ribosomal protein mL43 family. In terms of assembly, component of the mitochondrial large ribosomal subunit (mt-LSU). Mature yeast 74S mitochondrial ribosomes consist of a small (37S) and a large (54S) subunit. The 37S small subunit contains a 15S ribosomal RNA (15S mt-rRNA) and 34 different proteins. The 54S large subunit contains a 21S rRNA (21S mt-rRNA) and 46 different proteins.

It localises to the mitochondrion. In terms of biological role, component of the mitochondrial ribosome (mitoribosome), a dedicated translation machinery responsible for the synthesis of mitochondrial genome-encoded proteins, including at least some of the essential transmembrane subunits of the mitochondrial respiratory chain. The mitoribosomes are attached to the mitochondrial inner membrane and translation products are cotranslationally integrated into the membrane. Also has an extraribosomal function, being essential for mitochondrial genome integrity. May interact with MHR1 to take part in the mtDNA repair mechanism. The chain is Large ribosomal subunit protein mL43 (MRPL51) from Saccharomyces cerevisiae (strain ATCC 204508 / S288c) (Baker's yeast).